The chain runs to 794 residues: DNA ligase (794 aa).

NAD(+)-binding positions include 35 to 39 (DAEYD), 84 to 85 (SL), and Glu126. Lys128 functions as the N6-AMP-lysine intermediate in the catalytic mechanism. Arg149, Glu186, Lys302, and Lys326 together coordinate NAD(+). Residues Cys420, Cys423, Cys450, and Cys456 each contribute to the Zn(2+) site. The region spanning 711–794 (VEGLPLAGQT…KLFDEHGVAR (84 aa)) is the BRCT domain.

It belongs to the NAD-dependent DNA ligase family. LigA subfamily. The cofactor is Mg(2+). Mn(2+) serves as cofactor.

It carries out the reaction NAD(+) + (deoxyribonucleotide)n-3'-hydroxyl + 5'-phospho-(deoxyribonucleotide)m = (deoxyribonucleotide)n+m + AMP + beta-nicotinamide D-nucleotide.. Its function is as follows. DNA ligase that catalyzes the formation of phosphodiester linkages between 5'-phosphoryl and 3'-hydroxyl groups in double-stranded DNA using NAD as a coenzyme and as the energy source for the reaction. It is essential for DNA replication and repair of damaged DNA. This chain is DNA ligase, found in Pseudomonas aeruginosa (strain UCBPP-PA14).